Reading from the N-terminus, the 98-residue chain is Integration host factor subunit alpha (98 aa).

The protein belongs to the bacterial histone-like protein family. As to quaternary structure, heterodimer of an alpha and a beta chain.

In terms of biological role, this protein is one of the two subunits of integration host factor, a specific DNA-binding protein that functions in genetic recombination as well as in transcriptional and translational control. The protein is Integration host factor subunit alpha of Mannheimia succiniciproducens (strain KCTC 0769BP / MBEL55E).